Consider the following 307-residue polypeptide: Elongation factor Ts (307 aa).

The interval 80-83 is involved in Mg(2+) ion dislocation from EF-Tu; the sequence is TDFV.

This sequence belongs to the EF-Ts family.

It localises to the cytoplasm. Its function is as follows. Associates with the EF-Tu.GDP complex and induces the exchange of GDP to GTP. It remains bound to the aminoacyl-tRNA.EF-Tu.GTP complex up to the GTP hydrolysis stage on the ribosome. In Rhodospirillum centenum (strain ATCC 51521 / SW), this protein is Elongation factor Ts.